The chain runs to 198 residues: COMM domain-containing protein 9 (198 aa).

Residue alanine 2 is modified to N-acetylalanine. The COMM domain maps to 122–196 (RLVDLDWRVD…RIRDQLSAVA (75 aa)).

It belongs to the COMM domain-containing protein 9 family. As to quaternary structure, component of the commander complex consisting of the CCC subcomplex and the retriever subcomplex. Component of the CCC (COMMD/CCDC22/CCDC93) subcomplex consisting of COMMD1, COMMD2, COMMD3, COMMD4, COMMD5, COMMD6, COMMD7, COMMD8, COMMD9, COMMD10, CCDC22 and CCDC93; within the complex forms a heterodimer with COMMD7. Interacts with RELB and NFKB1/p105. Interacts with CCDC22, CCDC93, SCNN1B, CUL1. As to expression, ubiquitous.

The protein resides in the nucleus. It localises to the cytoplasmic vesicle. Its function is as follows. Scaffold protein in the commander complex that is essential for endosomal recycling of transmembrane cargos; the commander complex is composed of the CCC subcomplex and the retriever subcomplex. May modulate activity of cullin-RING E3 ubiquitin ligase (CRL) complexes. May down-regulate activation of NF-kappa-B. Modulates Na(+) transport in epithelial cells by regulation of apical cell surface expression of amiloride-sensitive sodium channel (ENaC) subunits. The protein is COMM domain-containing protein 9 (COMMD9) of Homo sapiens (Human).